Reading from the N-terminus, the 269-residue chain is Staphylococcal secretory antigen ssaA2 (269 aa).

The signal sequence occupies residues 1–27 (MKKIATATIATAGFATIAIASGNQAHA). Repeat copies occupy residues 83–85 (YNN), 88–90 (YNN), 91–93 (YNN), 97–99 (YNN), 103–105 (YNN), 106–108 (YSN), and 115–117 (YNN). A 7 X 3 AA repeats of Y-[NS]-N region spans residues 83–115 (YNNYNYNNYNNGYSYNNYSRYNNYSNNNQSYNY). One can recognise a Peptidase C51 domain in the interval 148–269 (MAPSSNGRSI…SQAAGYNFIH (122 aa)).

It is found in the secreted. Not known; immunogenic protein. The polypeptide is Staphylococcal secretory antigen ssaA2 (ssaA2) (Staphylococcus aureus (strain MSSA476)).